We begin with the raw amino-acid sequence, 392 residues long: Phosphopentomutase (392 aa).

Residues Asp10, Asp282, His287, Asp323, His324, and His335 each coordinate Mn(2+).

Belongs to the phosphopentomutase family. It depends on Mn(2+) as a cofactor.

Its subcellular location is the cytoplasm. It catalyses the reaction 2-deoxy-alpha-D-ribose 1-phosphate = 2-deoxy-D-ribose 5-phosphate. The catalysed reaction is alpha-D-ribose 1-phosphate = D-ribose 5-phosphate. It participates in carbohydrate degradation; 2-deoxy-D-ribose 1-phosphate degradation; D-glyceraldehyde 3-phosphate and acetaldehyde from 2-deoxy-alpha-D-ribose 1-phosphate: step 1/2. Its function is as follows. Isomerase that catalyzes the conversion of deoxy-ribose 1-phosphate (dRib-1-P) and ribose 1-phosphate (Rib-1-P) to deoxy-ribose 5-phosphate (dRib-5-P) and ribose 5-phosphate (Rib-5-P), respectively. This is Phosphopentomutase from Dictyoglomus thermophilum (strain ATCC 35947 / DSM 3960 / H-6-12).